The following is a 466-amino-acid chain: MDFNKENINMVDAKKAKKTVVATGIGNAMEWFDFGVYAYTTAYIGANFFSPVENADIRQMLTFAALAIAFLLRPIGGVVFGIIGDKYGRKVVLTSTIILMAFSTLTIGLLPSYDQIGLWAPILLLLARVLQGFSTGGEYAGAMTYVAESSPDKRRNSLGSGLEIGTLSGYIAASIMIAVLTFFLTDEQMASFGWRIPFLLGLFLGLFGLYLRRKLEESPVFENDVATQPERDNINFLQIIRFYYIDIFVCFVAVVFFNVTNYMVTAYLPTYLEQVIKLDATTTSVLITCVMAIMIPLALMFGKLADKIGEKKVFLIGTGGLTLFSIIAFMLLHSQSFVVIVIGIFILGFFLSTYEATMPGSLPTMFYSHIRYRTLSVTFNISVSIFGGTTPLVATWLVTKTGDPLAPAYYLTAISVIGFLVITFLHLSTAGKSLKGSYPNVDNEQDRAYYAEHPKEALWWVKERKN.

Transmembrane regions (helical) follow at residues 20-42, 63-83, 91-111, 116-136, 164-184, 191-211, 239-259, 285-305, 313-332, 337-354, 377-397, and 405-425; these read VVAT…YTTA, FAAL…FGII, VVLT…GLLP, IGLW…FSTG, IGTL…TFFL, SFGW…GLYL, IIRF…FFNV, VLIT…GKLA, VFLI…FMLL, FVVI…LSTY, VTFN…ATWL, and LAPA…ITFL.

It belongs to the major facilitator superfamily. Metabolite:H+ Symporter (MHS) family (TC 2.A.1.6) family.

It is found in the cell membrane. Its function is as follows. May be a proton symporter involved in the uptake of osmolytes such as proline and glycine betaine. This Staphylococcus aureus (strain MSSA476) protein is Putative proline/betaine transporter (proP).